The sequence spans 661 residues: Probable potassium transport system protein Kup 1 (661 aa).

Residues 1 to 11 (MKGLFPAGGGN) show a composition bias toward gly residues. A disordered region spans residues 1-38 (MKGLFPAGGGNPPSSYLSRFLPHRKERSPENVTSGRNG). The next 12 helical transmembrane spans lie at 48-68 (LALGALGIVYGDIGTSPLYTI), 85-105 (IMGVLSLILWSLTMVVSIKYI), 139-159 (AVVVMAALTGAALLYGDGFIT), 177-197 (AAKNLIVPLACGILLGLFLVQ), 207-227 (IFGPVMLVWFATIATLGLLCI), 251-271 (VHGLVVLGSVVLSITGGEALY), 286-306 (WFAMVFPSLLLNYFGQGAALL), 324-344 (LLLPMVALATMASIIASQAMI), 384-404 (LMMVVCIGLVLVFRASSGLAG), 405-425 (AYGVAVTANMAITSVVYFFVA), 436-456 (TAPLVGLFLVFDITYFGSNLL), and 458-478 (FFDGGWFPLAVALVIVIVMAS).

It belongs to the HAK/KUP transporter (TC 2.A.72) family.

The protein localises to the cell inner membrane. It catalyses the reaction K(+)(in) + H(+)(in) = K(+)(out) + H(+)(out). Transport of potassium into the cell. Likely operates as a K(+):H(+) symporter. The polypeptide is Probable potassium transport system protein Kup 1 (Syntrophobacter fumaroxidans (strain DSM 10017 / MPOB)).